Here is a 172-residue protein sequence, read N- to C-terminus: Thioredoxin Y1, chloroplastic (172 aa).

A chloroplast-targeting transit peptide spans 1–62; sequence MASISLSSST…SSTTRCTPRR (62 aa). The Thioredoxin domain maps to 63–169; that stretch reads IEAKKQTFDS…LIQRIEDSLK (107 aa). Residues C93 and C96 each act as nucleophile in the active site. The cysteines at positions 93 and 96 are disulfide-linked.

It belongs to the thioredoxin family. Plant Y-type subfamily. As to expression, expressed in roots and seeds.

The protein localises to the plastid. The protein resides in the chloroplast stroma. In terms of biological role, thiol-disulfide oxidoreductase that poorly activates chloroplastic malate dehydrogenase (NADP-MDH) and fructose-1,6-bisphosphatase. Provides reducing equivalents for peroxiredoxin Q. The protein is Thioredoxin Y1, chloroplastic of Arabidopsis thaliana (Mouse-ear cress).